The chain runs to 300 residues: MTQCDARLPQGGVKLADYTTWRVGGAAEWLAEPASLDETQAWIEWAAHQGMPCRVIGAGSNLLIHDDGLPGLSLCLRKLQGLQLDATTGTVEVLAGEPIPSLARRAARAGLHGLEWSIGIPGTAGGAAVMNAGAQGGCTAEWLESVRVVPLEGGNCFELQRHQLDFAYRHSRLQEDNLVVLSARFRLQPGHDPDELKRVTTANLSHRTTTQPYQQPSCGSVFRNPEPLKAGRLIEEQGLKGTRIGGAEISTVHANFIVNTGDAQAKDIAQLIHLVQDRIEAKHGIRLHTEVKRLGFASAA.

One can recognise an FAD-binding PCMH-type domain in the interval 22–190; it reads RVGGAAEWLA…LSARFRLQPG (169 aa). Arg169 is a catalytic residue. Ser220 acts as the Proton donor in catalysis. Residue Glu290 is part of the active site.

Belongs to the MurB family. It depends on FAD as a cofactor.

Its subcellular location is the cytoplasm. The enzyme catalyses UDP-N-acetyl-alpha-D-muramate + NADP(+) = UDP-N-acetyl-3-O-(1-carboxyvinyl)-alpha-D-glucosamine + NADPH + H(+). It functions in the pathway cell wall biogenesis; peptidoglycan biosynthesis. Cell wall formation. The chain is UDP-N-acetylenolpyruvoylglucosamine reductase from Synechococcus sp. (strain CC9605).